A 253-amino-acid polypeptide reads, in one-letter code: 5'-nucleotidase SurE (253 aa).

A divalent metal cation contacts are provided by Asp-8, Asp-9, Ser-40, and Asn-97.

It belongs to the SurE nucleotidase family. A divalent metal cation is required as a cofactor.

The protein localises to the cytoplasm. The catalysed reaction is a ribonucleoside 5'-phosphate + H2O = a ribonucleoside + phosphate. Nucleotidase that shows phosphatase activity on nucleoside 5'-monophosphates. The sequence is that of 5'-nucleotidase SurE from Desulforamulus reducens (strain ATCC BAA-1160 / DSM 100696 / MI-1) (Desulfotomaculum reducens).